Here is a 78-residue protein sequence, read N- to C-terminus: MPKRILQGVVVSDKNEKTIVVNVERRFQDPLLKKIVRRSKKYHAHDENKSAKVGDIVKIRECKPVSKLKKWEVFTDEA.

The protein belongs to the universal ribosomal protein uS17 family. In terms of assembly, part of the 30S ribosomal subunit.

One of the primary rRNA binding proteins, it binds specifically to the 5'-end of 16S ribosomal RNA. This chain is Small ribosomal subunit protein uS17, found in Parvibaculum lavamentivorans (strain DS-1 / DSM 13023 / NCIMB 13966).